The chain runs to 89 residues: Small ribosomal subunit protein uS15 (89 aa).

This sequence belongs to the universal ribosomal protein uS15 family. As to quaternary structure, part of the 30S ribosomal subunit. Forms a bridge to the 50S subunit in the 70S ribosome, contacting the 23S rRNA.

Its function is as follows. One of the primary rRNA binding proteins, it binds directly to 16S rRNA where it helps nucleate assembly of the platform of the 30S subunit by binding and bridging several RNA helices of the 16S rRNA. In terms of biological role, forms an intersubunit bridge (bridge B4) with the 23S rRNA of the 50S subunit in the ribosome. The chain is Small ribosomal subunit protein uS15 from Tolumonas auensis (strain DSM 9187 / NBRC 110442 / TA 4).